The sequence spans 143 residues: MVKIIDNSEVYNLIKNVTDQLGIEIIEINTFKKRDEGRIQIVLYKGNDFGVDTLCDLHKMILLSLEVVLKYNFSLEISTPGINRKIKSDREFKIFEGRKIKLMLDNDFEEGLILKAEADGFIFKTDTKEIRILYSDVKKAKLS.

This sequence belongs to the RimP family.

The protein resides in the cytoplasm. Required for maturation of 30S ribosomal subunits. This chain is Ribosome maturation factor RimP, found in Borrelia turicatae (strain 91E135).